We begin with the raw amino-acid sequence, 221 residues long: Endo-1,4-beta-xylanase I (221 aa).

The N-terminal stretch at 1-30 (MVSFTSIITAAVAATGALAAPATDVSLVAR) is a signal peptide. The 189-residue stretch at 31–219 (QNTPNGEGTH…STGNAQITVN (189 aa)) folds into the GH11 domain. Glutamate 115 functions as the Nucleophile in the catalytic mechanism. A disordered region spans residues 126–157 (DPSSQSQNKGTVTSDGSSYKIAQSTRTNQPSI). Glutamate 206 functions as the Proton donor in the catalytic mechanism.

Belongs to the glycosyl hydrolase 11 (cellulase G) family. The N-terminus is blocked.

The protein localises to the secreted. It carries out the reaction Endohydrolysis of (1-&gt;4)-beta-D-xylosidic linkages in xylans.. Its pathway is glycan degradation; xylan degradation. Functionally, major xylan-degrading enzyme. Contributes to the hydrolysis of arabinoxylan, the major component of maize cell-walls. This is Endo-1,4-beta-xylanase I (XYL1) from Cochliobolus carbonum (Maize leaf spot fungus).